The primary structure comprises 339 residues: Serine/arginine-rich splicing factor 6 (339 aa).

Residues Pro2–Gly72 enclose the RRM 1 domain. Residues Ser45, Ser81, and Ser84 each carry the phosphoserine modification. A disordered region spans residues Arg75 to Gly103. The 74-residue stretch at Tyr110 to Pro183 folds into the RRM 2 domain. Lys165 bears the N6-acetyllysine mark. Positions Ile176–Asp339 are disordered. Lys182 is covalently cross-linked (Glycyl lysine isopeptide (Lys-Gly) (interchain with G-Cter in SUMO2)). Residues Thr185–Lys250 are compositionally biased toward basic residues. A compositionally biased stretch (basic and acidic residues) spans Ser280–Ser291. Phosphoserine occurs at positions 297 and 299. Ser303 is subject to Phosphoserine; by DYRK1A. Phosphoserine occurs at positions 314 and 316. Residues Arg321–Asp339 show a composition bias toward basic residues.

Belongs to the splicing factor SR family. In terms of assembly, binds SREK1/SFRS12. Interacts with DYRK1A. Interacts with RBMY; the interaction inhibits SRSF6 pre-mRNA splicing. Extensively phosphorylated on serine residues in the RS domain. Phosphorylated by DYRK1A, probably in the RS domain. Phosphorylation by DYRK1A modulates alternative splice site selection and inhibits the expression of MAPT/Tau exon 10.

Its subcellular location is the nucleus. It is found in the nucleus speckle. Functionally, plays a role in constitutive splicing and modulates the selection of alternative splice sites. Plays a role in the alternative splicing of MAPT/Tau exon 10. Binds to alternative exons of TNC pre-mRNA and promotes the expression of alternatively spliced TNC. Plays a role in wound healing and in the regulation of keratinocyte differentiation and proliferation via its role in alternative splicing. This is Serine/arginine-rich splicing factor 6 (Srsf6) from Mus musculus (Mouse).